Here is a 377-residue protein sequence, read N- to C-terminus: Cytochrome b (377 aa).

4 consecutive transmembrane segments (helical) span residues 33-53 (FGSLLGLCLITQIMTGLFLAM), 77-98 (WLIRIIHANGASLFFICLYLHT), 113-133 (WTMGVILMFLVMGTAFMGYVL), and 178-198 (FFMIHFLLPFLIIGGLLVHLL). Residues H83 and H97 each coordinate heme b. Positions 182 and 196 each coordinate heme b. A ubiquinone is bound at residue H201. 4 helical membrane passes run 226–246 (YKDLVGVLIIMSGLLLLSLLS), 288–308 (LGGVIALVLSVSILFILPLSS), 320–340 (FNQIMFWVFINLVIMLTWIGA), and 347–367 (FIIMGQTLTCSYFMYFILNPM).

The protein belongs to the cytochrome b family. As to quaternary structure, the main subunits of complex b-c1 are: cytochrome b, cytochrome c1 and the Rieske protein. It depends on heme b as a cofactor.

Its subcellular location is the mitochondrion inner membrane. Component of the ubiquinol-cytochrome c reductase complex (complex III or cytochrome b-c1 complex) that is part of the mitochondrial respiratory chain. The b-c1 complex mediates electron transfer from ubiquinol to cytochrome c. Contributes to the generation of a proton gradient across the mitochondrial membrane that is then used for ATP synthesis. In Tetrodontophora bielanensis (Giant springtail), this protein is Cytochrome b (MT-CYB).